A 161-amino-acid chain; its full sequence is Putative outer membrane protein YedS (161 aa).

Residues 1-21 (MKRKVLAMLVPALLVAGAANA) form the signal peptide.

The protein belongs to the Gram-negative porin family.

The protein localises to the cell outer membrane. The sequence is that of Putative outer membrane protein YedS (yedS) from Escherichia coli (strain K12).